Reading from the N-terminus, the 424-residue chain is N-succinylarginine dihydrolase (424 aa).

Residues 19-28 (AGLSRGNVAS), N110, and 137-138 (HR) contribute to the substrate site. The active site involves E174. R206 contributes to the substrate binding site. H242 is an active-site residue. Substrate contacts are provided by D244 and N351. C357 serves as the catalytic Nucleophile.

The protein belongs to the succinylarginine dihydrolase family. As to quaternary structure, homodimer.

It catalyses the reaction N(2)-succinyl-L-arginine + 2 H2O + 2 H(+) = N(2)-succinyl-L-ornithine + 2 NH4(+) + CO2. It functions in the pathway amino-acid degradation; L-arginine degradation via AST pathway; L-glutamate and succinate from L-arginine: step 2/5. Catalyzes the hydrolysis of N(2)-succinylarginine into N(2)-succinylornithine, ammonia and CO(2). The polypeptide is N-succinylarginine dihydrolase (Zymomonas mobilis subsp. mobilis (strain ATCC 31821 / ZM4 / CP4)).